Consider the following 106-residue polypeptide: Small ribosomal subunit protein uS10 (106 aa).

It belongs to the universal ribosomal protein uS10 family. Part of the 30S ribosomal subunit.

Functionally, involved in the binding of tRNA to the ribosomes. The sequence is that of Small ribosomal subunit protein uS10 from Caldicellulosiruptor saccharolyticus (strain ATCC 43494 / DSM 8903 / Tp8T 6331).